Here is a 771-residue protein sequence, read N- to C-terminus: Kinase suppressor of Ras A (771 aa).

Residues 152–169 (SRTSSGSTDEPSGQSTPA) show a composition bias toward polar residues. The tract at residues 152 to 172 (SRTSSGSTDEPSGQSTPAIVT) is disordered. A Phorbol-ester/DAG-type zinc finger spans residues 215–269 (PHKWHRSTKFRFSGDAVCHFCQRPLGFGFLNAWEKCRSCKWKVHTQCKGRVGDSC). Disordered stretches follow at residues 290-339 (GMWK…ISGN) and 414-433 (DSTG…EAVD). A compositionally biased stretch (low complexity) spans 318–331 (SSSSTNSSAPSTPA). One can recognise a Protein kinase domain in the interval 477–748 (DKQAPIIGRG…TDINLKLTAL (272 aa)). ATP-binding positions include 483–491 (IGRGRFGKV) and K503. Catalysis depends on D600, which acts as the Proton acceptor.

It belongs to the protein kinase superfamily. TKL Ser/Thr protein kinase family. As to quaternary structure, interacts with mek-2. Requires Mg(2+) as cofactor.

The enzyme catalyses L-seryl-[protein] + ATP = O-phospho-L-seryl-[protein] + ADP + H(+). It carries out the reaction L-threonyl-[protein] + ATP = O-phospho-L-threonyl-[protein] + ADP + H(+). Functionally, serine/threonine-protein kinase which positively regulates Ras-mediated signaling probably acting at the level of let-60/ras or/and lin-45/raf. Involved in sex myoblast migration. Plays a role in responses to M.nematophilum-mediated bacterial infection by promoting tail swelling and preventing constipation. Functions redundantly with ksr-2 in the Ras-mediated regulation of larval survival, the development of excretory canal and in mpk-1 phosphorylation in somatic cells. In addition, involved in determining vulval precursor cell fate during vulval induction independently of its kinase activity. Plays a role in egg-laying. This chain is Kinase suppressor of Ras A, found in Caenorhabditis elegans.